The sequence spans 343 residues: UPF0324 membrane protein LJ_1117 (343 aa).

10 consecutive transmembrane segments (helical) span residues 10-27, 32-54, 64-86, 91-113, 123-145, 157-179, 219-241, 262-284, 288-310, and 317-339; these read FGLA…GIFL, YVNL…VLPV, IGFI…LNLT, AGIK…TYWL, LAVL…VSPQ, NEVL…EIVI, ALIM…GYWY, IPWF…FPPV, GLVQ…SVNF, and GGTV…IIMS.

This sequence belongs to the UPF0324 family.

It is found in the cell membrane. The protein is UPF0324 membrane protein LJ_1117 of Lactobacillus johnsonii (strain CNCM I-12250 / La1 / NCC 533).